Reading from the N-terminus, the 260-residue chain is Ribosomal RNA small subunit methyltransferase A (260 aa).

The S-adenosyl-L-methionine site is built by L23, G48, E69, D94, and N110.

The protein belongs to the class I-like SAM-binding methyltransferase superfamily. rRNA adenine N(6)-methyltransferase family. RsmA subfamily.

The protein resides in the cytoplasm. The catalysed reaction is adenosine(1518)/adenosine(1519) in 16S rRNA + 4 S-adenosyl-L-methionine = N(6)-dimethyladenosine(1518)/N(6)-dimethyladenosine(1519) in 16S rRNA + 4 S-adenosyl-L-homocysteine + 4 H(+). Specifically dimethylates two adjacent adenosines (A1518 and A1519) in the loop of a conserved hairpin near the 3'-end of 16S rRNA in the 30S particle. May play a critical role in biogenesis of 30S subunits. The sequence is that of Ribosomal RNA small subunit methyltransferase A from Thermotoga petrophila (strain ATCC BAA-488 / DSM 13995 / JCM 10881 / RKU-1).